A 369-amino-acid polypeptide reads, in one-letter code: 4-hydroxy-3-methylbut-2-en-1-yl diphosphate synthase (flavodoxin) (369 aa).

Residues Cys-270, Cys-273, Cys-305, and Glu-312 each contribute to the [4Fe-4S] cluster site.

It belongs to the IspG family. Requires [4Fe-4S] cluster as cofactor.

It carries out the reaction (2E)-4-hydroxy-3-methylbut-2-enyl diphosphate + oxidized [flavodoxin] + H2O + 2 H(+) = 2-C-methyl-D-erythritol 2,4-cyclic diphosphate + reduced [flavodoxin]. Its pathway is isoprenoid biosynthesis; isopentenyl diphosphate biosynthesis via DXP pathway; isopentenyl diphosphate from 1-deoxy-D-xylulose 5-phosphate: step 5/6. Converts 2C-methyl-D-erythritol 2,4-cyclodiphosphate (ME-2,4cPP) into 1-hydroxy-2-methyl-2-(E)-butenyl 4-diphosphate. The sequence is that of 4-hydroxy-3-methylbut-2-en-1-yl diphosphate synthase (flavodoxin) from Pseudomonas putida (strain W619).